Consider the following 225-residue polypeptide: Thymidylate kinase (225 aa).

12 to 19 is a binding site for ATP; sequence GGEGAGKS.

This sequence belongs to the thymidylate kinase family.

The enzyme catalyses dTMP + ATP = dTDP + ADP. Its function is as follows. Phosphorylation of dTMP to form dTDP in both de novo and salvage pathways of dTTP synthesis. This chain is Thymidylate kinase, found in Chelativorans sp. (strain BNC1).